A 246-amino-acid polypeptide reads, in one-letter code: Nodulin-25 (246 aa).

The first 24 residues, 1–24 (MVYSNTYMLLGLGVFVLLSSHVLA), serve as a signal peptide directing secretion.

Its subcellular location is the symbiosome. It is found in the peribacteroid space. Functionally, involved in the development and function of nodules. It might participate in the biological process of symbiotic nitrogen fixation. This is Nodulin-25 (NMS-25) from Medicago sativa (Alfalfa).